A 243-amino-acid polypeptide reads, in one-letter code: CTD nuclear envelope phosphatase 1 homolog (243 aa).

The chain crosses the membrane as a helical span at residues 11-27 (ALLLLLSKVWTCICFMF). Residues 56 to 223 (SLVQRKTLVL…LSLLPMLDAL (168 aa)) form the FCP1 homology domain.

This sequence belongs to the dullard family.

It localises to the membrane. The catalysed reaction is O-phospho-L-seryl-[protein] + H2O = L-seryl-[protein] + phosphate. The enzyme catalyses O-phospho-L-threonyl-[protein] + H2O = L-threonyl-[protein] + phosphate. Its function is as follows. Serine/threonine protein phosphatase that may dephosphorylate and activate lipin-like phosphatases. Lipins are phosphatidate phosphatases that catalyze the conversion of phosphatidic acid to diacylglycerol and control the metabolism of fatty acids at different levels. May indirectly modulate the lipid composition of nuclear and/or endoplasmic reticulum membranes and be required for proper nuclear membrane morphology and/or dynamics. May also indirectly regulate the production of lipid droplets and triacylglycerol. The chain is CTD nuclear envelope phosphatase 1 homolog (Dd) from Drosophila melanogaster (Fruit fly).